The primary structure comprises 527 residues: Putative ribose/galactose/methyl galactoside import ATP-binding protein 2 (527 aa).

The segment at 1–31 is disordered; it reads MFTARVARPMAGDDAPAASSGSTGSSAPPAS. A compositionally biased stretch (low complexity) spans 12-31; the sequence is GDDAPAASSGSTGSSAPPAS. ABC transporter domains are found at residues 38–274 and 284–523; these read LEVR…VGRE and VPIG…RIMD. Residue 70 to 77 coordinates ATP; it reads GENGAGKS.

It belongs to the ABC transporter superfamily. Carbohydrate importer 2 (CUT2) (TC 3.A.1.2) family.

Its subcellular location is the cell inner membrane. It carries out the reaction D-ribose(out) + ATP + H2O = D-ribose(in) + ADP + phosphate + H(+). The enzyme catalyses D-galactose(out) + ATP + H2O = D-galactose(in) + ADP + phosphate + H(+). Part of an ABC transporter complex involved in carbohydrate import. Could be involved in ribose, galactose and/or methyl galactoside import. Responsible for energy coupling to the transport system. This chain is Putative ribose/galactose/methyl galactoside import ATP-binding protein 2, found in Burkholderia lata (strain ATCC 17760 / DSM 23089 / LMG 22485 / NCIMB 9086 / R18194 / 383).